A 341-amino-acid chain; its full sequence is Heat-inducible transcription repressor HrcA (341 aa).

The protein belongs to the HrcA family.

Negative regulator of class I heat shock genes (grpE-dnaK-dnaJ and groELS operons). Prevents heat-shock induction of these operons. The protein is Heat-inducible transcription repressor HrcA of Symbiobacterium thermophilum (strain DSM 24528 / JCM 14929 / IAM 14863 / T).